Reading from the N-terminus, the 402-residue chain is Imidazolonepropionase (402 aa).

Fe(3+) contacts are provided by His66 and His68. Positions 66 and 68 each coordinate Zn(2+). The 4-imidazolone-5-propanoate site is built by Arg75, Tyr138, and His171. Tyr138 contacts N-formimidoyl-L-glutamate. His236 serves as a coordination point for Fe(3+). A Zn(2+)-binding site is contributed by His236. Gln239 is a binding site for 4-imidazolone-5-propanoate. Asp311 contacts Fe(3+). Residue Asp311 coordinates Zn(2+). N-formimidoyl-L-glutamate-binding residues include Asn313 and Gly315. Position 316 (Thr316) interacts with 4-imidazolone-5-propanoate.

It belongs to the metallo-dependent hydrolases superfamily. HutI family. The cofactor is Zn(2+). Fe(3+) is required as a cofactor.

Its subcellular location is the cytoplasm. The catalysed reaction is 4-imidazolone-5-propanoate + H2O = N-formimidoyl-L-glutamate. The protein operates within amino-acid degradation; L-histidine degradation into L-glutamate; N-formimidoyl-L-glutamate from L-histidine: step 3/3. Its function is as follows. Catalyzes the hydrolytic cleavage of the carbon-nitrogen bond in imidazolone-5-propanoate to yield N-formimidoyl-L-glutamate. It is the third step in the universal histidine degradation pathway. The chain is Imidazolonepropionase from Pseudomonas aeruginosa (strain UCBPP-PA14).